The primary structure comprises 261 residues: Indole-3-glycerol phosphate synthase (261 aa).

The protein belongs to the TrpC family.

The enzyme catalyses 1-(2-carboxyphenylamino)-1-deoxy-D-ribulose 5-phosphate + H(+) = (1S,2R)-1-C-(indol-3-yl)glycerol 3-phosphate + CO2 + H2O. Its pathway is amino-acid biosynthesis; L-tryptophan biosynthesis; L-tryptophan from chorismate: step 4/5. The polypeptide is Indole-3-glycerol phosphate synthase (Alkaliphilus metalliredigens (strain QYMF)).